A 395-amino-acid chain; its full sequence is Long-chain-alcohol dehydrogenase 1 (395 aa).

NAD(+) is bound by residues Gly-98–Asp-102 and Thr-141–Gly-144.

The protein belongs to the iron-containing alcohol dehydrogenase family. As to quaternary structure, homooctamer.

The catalysed reaction is glycerol + NAD(+) = dihydroxyacetone + NADH + H(+). It carries out the reaction a long-chain primary fatty alcohol + 2 NAD(+) + H2O = a long-chain fatty acid + 2 NADH + 3 H(+). Functionally, long-chain alkyl alcohol dehydrogenase that can oxidize a broad range of alkyl alcohols from ethanol to 1-triacontanol (C2 to C30) as well as 1,3-propanediol and acetaldehyde. The best substrate is ethanol. Also oxidizes glycerol. The sequence is that of Long-chain-alcohol dehydrogenase 1 (adh1) from Geobacillus thermodenitrificans (strain NG80-2).